Consider the following 95-residue polypeptide: Lipolysis-activating peptide 1-beta chain (95 aa).

The signal sequence occupies residues 1 to 22 (MISVQVIFIAFISIIAFSMVCG). In terms of domain architecture, LCN-type CS-alpha/beta spans 23–91 (GNVFPNRELG…FLNALEKQCP (69 aa)). 3 disulfides stabilise this stretch: Cys37-Cys60, Cys45-Cys70, and Cys49-Cys72.

In terms of assembly, homodimer; disulfide-linked or monomer (edited version) or heterodimer of an alpha chain (AC P84810) and this beta chain (non-edited version). As to expression, expressed by the venom gland.

Its subcellular location is the secreted. In terms of biological role, the homodimer inhibits HMG-CoA reductase (HMGCR) (32% of inhibition produced by 0.6 uM), a glycoprotein involved in the control of cholesterol biosynthesis. The inhibitory effects of bumarsin are seen at much lower concentrations (0.6 uM) than that for statins such as atorvastatin (5 mM) and simvastatin (10 uM). In addition to inhibition of HMG-CoA reductase, this protein lowers cholesterol levels by inducing steroid hormone synthesis via StAR, and by increasing reverse cholesterol transport mediated by the induction of ABCA1 and APOA1. Its function is as follows. The heterodimer non-edited LVP1 induces lipolysis in rat adipocytes. Induction of lipolysis by LVP1 appears to be mediated through the beta-2 adrenergic receptor pathway (ADRB2). Intracerebroventricular injection is not toxic to mice. Functionally, the monomer edited version, similar to alpha-toxins, may modulate voltage-gated sodium channels (Nav) and may block voltage-gated potassium channels (Kv). The polypeptide is Lipolysis-activating peptide 1-beta chain (Buthus occitanus tunetanus (Common European scorpion)).